The primary structure comprises 150 residues: MRVLLQRCYEASVSVEEEVISEIAGGLCLLVGFTHKDTPETVDYMAKKIVGLRIFEDESEKMNISLAERGGAILSVSQFTLYADVSRGKRPSFTKSAPAEKAETLYDLFNQKLTEAGFIVETGVFGAMMDVKIVNHGPVTIMLDSDEMRK.

Residues 137–138 carry the Gly-cisPro motif, important for rejection of L-amino acids motif; it reads GP.

It belongs to the DTD family. In terms of assembly, homodimer.

It localises to the cytoplasm. It catalyses the reaction glycyl-tRNA(Ala) + H2O = tRNA(Ala) + glycine + H(+). The catalysed reaction is a D-aminoacyl-tRNA + H2O = a tRNA + a D-alpha-amino acid + H(+). Functionally, an aminoacyl-tRNA editing enzyme that deacylates mischarged D-aminoacyl-tRNAs. Also deacylates mischarged glycyl-tRNA(Ala), protecting cells against glycine mischarging by AlaRS. Acts via tRNA-based rather than protein-based catalysis; rejects L-amino acids rather than detecting D-amino acids in the active site. By recycling D-aminoacyl-tRNA to D-amino acids and free tRNA molecules, this enzyme counteracts the toxicity associated with the formation of D-aminoacyl-tRNA entities in vivo and helps enforce protein L-homochirality. This Listeria monocytogenes serotype 4b (strain CLIP80459) protein is D-aminoacyl-tRNA deacylase.